We begin with the raw amino-acid sequence, 368 residues long: tRNA-specific 2-thiouridylase MnmA (368 aa).

ATP contacts are provided by residues 12–19 (AMSGGVDS) and Met-38. Residues 98–100 (NPD) are interaction with target base in tRNA. Catalysis depends on Cys-103, which acts as the Nucleophile. Cys-103 and Cys-200 are joined by a disulfide. ATP is bound at residue Gly-128. The tract at residues 150–152 (KDQ) is interaction with tRNA. Cys-200 (cysteine persulfide intermediate) is an active-site residue. The interaction with tRNA stretch occupies residues 312 to 313 (RY).

It belongs to the MnmA/TRMU family. In terms of assembly, interacts with TusE.

It localises to the cytoplasm. The catalysed reaction is S-sulfanyl-L-cysteinyl-[protein] + uridine(34) in tRNA + AH2 + ATP = 2-thiouridine(34) in tRNA + L-cysteinyl-[protein] + A + AMP + diphosphate + H(+). Its function is as follows. Catalyzes the 2-thiolation of uridine at the wobble position (U34) of tRNA(Lys), tRNA(Glu) and tRNA(Gln), leading to the formation of s(2)U34, the first step of tRNA-mnm(5)s(2)U34 synthesis. Sulfur is provided by IscS, via a sulfur-relay system. Binds ATP and its substrate tRNAs. The sequence is that of tRNA-specific 2-thiouridylase MnmA from Buchnera aphidicola subsp. Acyrthosiphon pisum (strain APS) (Acyrthosiphon pisum symbiotic bacterium).